The chain runs to 468 residues: DNA polymerase IV 1 (468 aa).

The UmuC domain occupies 6–188 (VLHLDMDAFF…LPVRRLWGIG (183 aa)). Residues Asp-10 and Asp-105 each contribute to the Mg(2+) site. Glu-106 is a catalytic residue.

This sequence belongs to the DNA polymerase type-Y family. Monomer. It depends on Mg(2+) as a cofactor.

It localises to the cytoplasm. The catalysed reaction is DNA(n) + a 2'-deoxyribonucleoside 5'-triphosphate = DNA(n+1) + diphosphate. Its function is as follows. Poorly processive, error-prone DNA polymerase involved in untargeted mutagenesis. Copies undamaged DNA at stalled replication forks, which arise in vivo from mismatched or misaligned primer ends. These misaligned primers can be extended by PolIV. Exhibits no 3'-5' exonuclease (proofreading) activity. May be involved in translesional synthesis, in conjunction with the beta clamp from PolIII. The chain is DNA polymerase IV 1 (dinB1) from Mycobacterium tuberculosis (strain CDC 1551 / Oshkosh).